We begin with the raw amino-acid sequence, 857 residues long: Facilitated trehalose transporter Tret1-1 (857 aa).

Disordered regions lie at residues 1–27 (MSGRDNRGAGGGGGGHQPLSNAMGKLK) and 92–203 (SFRP…KATS). The Cytoplasmic portion of the chain corresponds to 1–392 (MSGRDNRGAG…VYRPTTNPIY (392 aa)). Positions 134-143 (EIREHRDRQQ) are enriched in basic and acidic residues. The segment covering 171–181 (GNSNTNSNKAA) has biased composition (polar residues). Serine 248, serine 249, serine 250, serine 320, and serine 322 each carry phosphoserine. The interval 327 to 346 (LTSRQHFQQQRSISTDSRKS) is disordered. Residues 330–341 (RQHFQQQRSIST) show a composition bias toward polar residues. The chain crosses the membrane as a helical span at residues 393–413 (IWTQVLAALSVSLGSLVVGFV). Topologically, residues 414 to 440 (SAYTSPALVSMTDRNITSFEVTQDAGS) are extracellular. An N-linked (GlcNAc...) asparagine glycan is attached at asparagine 428. A helical transmembrane segment spans residues 441–461 (WVGGIMPLAALAGGITGGPLI). Residues 462 to 473 (EYLGRRNTILAT) are Cytoplasmic-facing. Residues 474–494 (AVPFIVSSLLIACAVNVAMVL) form a helical membrane-spanning segment. The Extracellular segment spans residues 495–497 (CGR). The helical transmembrane segment at 498-518 (FLAGFCVGIASLSLPVYLGET) threads the bilayer. Topologically, residues 519-528 (VQPEVRGTLG) are cytoplasmic. A helical membrane pass occupies residues 529–549 (LLPTAFGNIGILLCFVAGSFM). A glycan (N-linked (GlcNAc...) asparagine) is linked at asparagine 550. The Extracellular segment spans residues 550-552 (NWS). The helical transmembrane segment at 553-573 (MLAFLGAALPVPFLILMFLIP) threads the bilayer. The Cytoplasmic portion of the chain corresponds to 574–636 (ETPRWFVGRG…ELLKLNNLKP (63 aa)). A helical transmembrane segment spans residues 637–657 (LSISLGLMFFQQFSGINAVIF). The Extracellular segment spans residues 658-673 (YTVQIFKDAGSTIDGN). Residues 674–694 (LCTIIVGIVNFLATFIGIVLI) traverse the membrane as a helical segment. Over 695-700 (DRAGRK) the chain is Cytoplasmic. Residues 701-721 (ILLYVSDIAMVLTLFVLGGFF) traverse the membrane as a helical segment. Topologically, residues 722–740 (YCKANGPDVSHLGWLPLTC) are extracellular. Residues 741–761 (FVIYILGFSLGFGPIPWLMMG) traverse the membrane as a helical segment. Residues 762–767 (EILPAK) lie on the Cytoplasmic side of the membrane. A helical membrane pass occupies residues 768-788 (IRGSAASVATAFNWFCTFVVT). Over 789 to 801 (KTFQDLTVAMGAH) the chain is Extracellular. A helical membrane pass occupies residues 802-822 (GAFWLFGAICFVGLFFVIIYV). The Cytoplasmic portion of the chain corresponds to 823–857 (PETQGKTLEDIERKMMGRVRRMSSVANIKPLSFNM). Phosphoserine is present on residues serine 845 and serine 846.

This sequence belongs to the major facilitator superfamily. Sugar transporter (TC 2.A.1.1) family. Trehalose transporter subfamily.

It localises to the cell membrane. Low-capacity facilitative transporter for trehalose. Does not transport maltose, sucrose or lactose. Mediates the bidirectional transfer of trehalose. Responsible for the transport of trehalose synthesized in the fat body and the incorporation of trehalose into other tissues that require a carbon source, thereby regulating trehalose levels in the hemolymph. This is Facilitated trehalose transporter Tret1-1 from Drosophila sechellia (Fruit fly).